Consider the following 699-residue polypeptide: Polyribonucleotide nucleotidyltransferase (699 aa).

Residues Asp485 and Asp491 each coordinate Mg(2+). The region spanning 552–611 (PRITTIKINPEKIRDVIGKGGAVIRALTEETGTTIELEDDGTVKIASSNGDATREAIRRI) is the KH domain. The S1 motif domain occupies 621 to 689 (GRIYNGKVIR…RQGRVRLSIK (69 aa)).

Belongs to the polyribonucleotide nucleotidyltransferase family. In terms of assembly, component of the RNA degradosome, which is a multiprotein complex involved in RNA processing and mRNA degradation. Requires Mg(2+) as cofactor.

The protein resides in the cytoplasm. The catalysed reaction is RNA(n+1) + phosphate = RNA(n) + a ribonucleoside 5'-diphosphate. In terms of biological role, involved in mRNA degradation. Catalyzes the phosphorolysis of single-stranded polyribonucleotides processively in the 3'- to 5'-direction. This is Polyribonucleotide nucleotidyltransferase from Shewanella sp. (strain ANA-3).